We begin with the raw amino-acid sequence, 166 residues long: MFPMVTEFMNYGQQTIRAARYIGQGFMITLSHANRLPVTIQYPYEKLITSERFRGRIHFEFDKCIACEVCVRVCPIDLPVVDWKLETDIRKKRLLNYSIDFGICIFCGNCVEYCPTNCLSMTEEYELSTYDRHELNYNQIALGRLPMSIIDDYTIRTILNLPEIKT.

4Fe-4S ferredoxin-type domains are found at residues 55 to 84 (GRIH…VDWK) and 95 to 124 (LNYS…MTEE). [4Fe-4S] cluster-binding residues include Cys64, Cys67, Cys70, Cys74, Cys104, Cys107, Cys110, and Cys114.

It belongs to the complex I 23 kDa subunit family. NDH is composed of at least 16 different subunits, 5 of which are encoded in the nucleus. [4Fe-4S] cluster serves as cofactor.

The protein resides in the plastid. Its subcellular location is the chloroplast thylakoid membrane. It carries out the reaction a plastoquinone + NADH + (n+1) H(+)(in) = a plastoquinol + NAD(+) + n H(+)(out). The enzyme catalyses a plastoquinone + NADPH + (n+1) H(+)(in) = a plastoquinol + NADP(+) + n H(+)(out). NDH shuttles electrons from NAD(P)H:plastoquinone, via FMN and iron-sulfur (Fe-S) centers, to quinones in the photosynthetic chain and possibly in a chloroplast respiratory chain. The immediate electron acceptor for the enzyme in this species is believed to be plastoquinone. Couples the redox reaction to proton translocation, and thus conserves the redox energy in a proton gradient. The protein is NAD(P)H-quinone oxidoreductase subunit I, chloroplastic of Oxypappus scaber.